A 237-amino-acid polypeptide reads, in one-letter code: RNA-binding protein 38 (237 aa).

Positions 1–24 are disordered; the sequence is MLLQPACSPSVFPRPSAAPSAMHG. In terms of domain architecture, RRM spans 32-109; that stretch reads TKIFVGGLPY…RKANVNLAYL (78 aa).

It belongs to the RBM38 family. Expressed in cardiac and skeletal muscle tissues.

It is found in the cytoplasm. The protein localises to the cytosol. The protein resides in the nucleus. Its function is as follows. RNA-binding protein that specifically bind the 3'-UTR of CDKN1A transcripts, leading to maintain the stability of CDKN1A transcripts, thereby acting as a mediator of the p53/TP53 family to regulate CDKN1A. CDKN1A is a cyclin-dependent kinase inhibitor transcriptionally regulated by the p53/TP53 family to induce cell cycle arrest. Has the ability to induce cell cycle arrest in G1 and maintain the stability of CDKN1A transcripts induced by p53/TP53. Also acts as a mRNA splicing factor. Specifically regulates the expression of FGFR2-IIIb, an epithelial cell-specific isoform of FGFR2. Plays a role in myogenic differentiation. This Mus musculus (Mouse) protein is RNA-binding protein 38 (Rbm38).